We begin with the raw amino-acid sequence, 294 residues long: 4-hydroxy-tetrahydrodipicolinate synthase (294 aa).

Position 47 (threonine 47) interacts with pyruvate. Tyrosine 135 serves as the catalytic Proton donor/acceptor. Lysine 163 (schiff-base intermediate with substrate) is an active-site residue. Residue valine 205 coordinates pyruvate.

Belongs to the DapA family. In terms of assembly, homotetramer; dimer of dimers.

Its subcellular location is the cytoplasm. It catalyses the reaction L-aspartate 4-semialdehyde + pyruvate = (2S,4S)-4-hydroxy-2,3,4,5-tetrahydrodipicolinate + H2O + H(+). It functions in the pathway amino-acid biosynthesis; L-lysine biosynthesis via DAP pathway; (S)-tetrahydrodipicolinate from L-aspartate: step 3/4. Functionally, catalyzes the condensation of (S)-aspartate-beta-semialdehyde [(S)-ASA] and pyruvate to 4-hydroxy-tetrahydrodipicolinate (HTPA). The sequence is that of 4-hydroxy-tetrahydrodipicolinate synthase from Rickettsia canadensis (strain McKiel).